A 496-amino-acid polypeptide reads, in one-letter code: MHNSPLYAAIDLGSNSFHMLVVREVAGALRTVTKVKRKVRLAAGLDPEFRLSRAAMERGWDCLRLFSEQLQDIPADNIRVVGTATLRLATNVDEFLSEAERVLNHSIEIISGEEEAKTIYEGVSWTSAGEGNRLVIDIGGASTELVIGEHSEAKLLNSLHMGCVTWLNNHFGDGELSEARFAQAIAAAKAVLEKVAEDYCVLGWRTCVGASGTVQALQEIMLAQGKSERVTLPKLQELMGQAIACGRLDRLQLEGLAAERLTVFPSGLAILIAIFETLNIESMTLAGGALREGLIYGLLGNNHDCDARDRTADSLISCYQLDKEHAERVRDTAIEAFNQLQPAWRLSKRYGRPILRYAALLHEIGLCIEYKKAPQHAAYIIDNIDMPGFTPAQKKLLSALLFNQRDEFKLETLEKQGAVTGRQAIRLARILRISLILCMRRTQGTVPNFTLQAEEEALTLTLPKGWMDEHYLRASELRLEVERQQKMGWPTRLLEA.

It belongs to the GppA/Ppx family. GppA subfamily.

It catalyses the reaction guanosine 3'-diphosphate 5'-triphosphate + H2O = guanosine 3',5'-bis(diphosphate) + phosphate + H(+). It functions in the pathway purine metabolism; ppGpp biosynthesis; ppGpp from GTP: step 2/2. In terms of biological role, catalyzes the conversion of pppGpp to ppGpp. Guanosine pentaphosphate (pppGpp) is a cytoplasmic signaling molecule which together with ppGpp controls the 'stringent response', an adaptive process that allows bacteria to respond to amino acid starvation, resulting in the coordinated regulation of numerous cellular activities. This Aeromonas salmonicida (strain A449) protein is Guanosine-5'-triphosphate,3'-diphosphate pyrophosphatase.